We begin with the raw amino-acid sequence, 470 residues long: Zinc finger protein weckle (470 aa).

Residues 1–103 (MGVPTSDWIY…DALRLEYGLP (103 aa)) form a required for homodimerization region. One can recognise a ZAD domain in the interval 10-82 (YWCRLCARDD…SKVQAIFELL (73 aa)). The Zn(2+) site is built by Cys12, Cys15, Cys55, and Cys58. Residues 156 to 265 (NSDPKVLASP…LSMSPHGSQS (110 aa)) are disordered. Residue Ser168 is modified to Phosphoserine. Acidic residues predominate over residues 195-208 (ESDDEEAILDEDEA). Residues 214–225 (LKRKRGRPKGSG) show a composition bias toward basic residues. Residues 237–254 (TSREPDDNAKSKQDDKTS) are compositionally biased toward basic and acidic residues. Over residues 255–265 (ELSMSPHGSQS) the composition is skewed to polar residues. 6 C2H2-type zinc fingers span residues 271-294 (YPCK…HDMH), 300-322 (YVCD…QLVH), 328-350 (CICP…SQTH), 355-377 (FECN…KYVH), 383-405 (FKCE…LLGH), and 411-434 (YVCK…WKKH).

Homodimer. Interacts with Myd88 and Toll.

It is found in the cell membrane. In terms of biological role, acts as an adapter to assemble/stabilize a Toll/wek/Myd88/tube complex; required for efficient recruitment of Myd88 to Toll. Dispensable for innate immune response; plays a minimal role, if any, in the immune defense against Gram-positive bacteria and fungi. Involved in dorsoventral axis determination. The polypeptide is Zinc finger protein weckle (Drosophila melanogaster (Fruit fly)).